A 377-amino-acid polypeptide reads, in one-letter code: Mucin-7 (377 aa).

A signal peptide spans 1–22 (MKTLPLFVCICALSACFSFSEG). The segment at 70–100 (CRPKLPPSPNNPPKFPNPHQPPKHPDKNSSV) is disordered. Residues 73 to 89 (KLPPSPNNPPKFPNPHQ) are compositionally biased toward pro residues. N-linked (GlcNAc...) asparagine glycans are attached at residues N97, N128, N135, and N146. A disordered region spans residues 150-355 (SVATLAPVNS…QPTSAPGQNK (206 aa)). 6 repeat units span residues 165 to 187 (TTAA…APPE), 188 to 210 (TTAA…APPE), 211 to 233 (TTAA…APPE), 234 to 256 (TTAA…APPE), 257 to 279 (TTAV…APPE), and 280 to 302 (TTAA…APQE). Residues 169–183 (PPTPSATTPAPPSSS) show a composition bias toward pro residues. T176 carries an O-linked (GalNAc) threonine; by GALNT13 glycan. O-linked (GalNAc) serine; by GALNT13 glycans are attached at residues S182 and S183. Positions 184–214 (APPETTAAPPTPSATTQAPPSSSAPPETTAA) are enriched in low complexity. O-linked (GalNAc) threonine; by GALNT13 glycans are attached at residues T188 and T189. A compositionally biased stretch (pro residues) spans 215–229 (PPTPPATTPAPPSSS). The segment covering 230–283 (APPETTAAPPTPSATTPAPLSSSAPPETTAVPPTPSATTLDPSSASAPPETTAA) has biased composition (low complexity). Positions 284 to 298 (PPTPSATTPAPPSSP) are enriched in pro residues. A compositionally biased stretch (polar residues) spans 309–329 (TTPNSSPTTLAPDTSETSAAP). Low complexity predominate over residues 330–348 (THQTTTSVTTQTTTTKQPT).

In terms of assembly, monomer. N- and O-glycosylated. Contains fucose, mannose, galactose, N-acetylglucosamine and N-acetylgalactosamine. In terms of tissue distribution, expressed in salivary gland tissues and only in those that contain mucous acinar cells (e.g. sublingual and submandibular glands) and not in salivary glands containing only serous acinar cells (e.g. parotid gland).

The protein localises to the secreted. May function in a protective capacity by promoting the clearance of bacteria in the oral cavity and aiding in mastication, speech, and swallowing. Binds P.aeruginosa pili. In Homo sapiens (Human), this protein is Mucin-7 (MUC7).